A 135-amino-acid polypeptide reads, in one-letter code: Small ribosomal subunit protein bS6 (135 aa).

Residues 104-135 (FSRLDRNGHIGHDEKHPRSPSRQREDVIEGVE) are disordered.

Belongs to the bacterial ribosomal protein bS6 family.

Its function is as follows. Binds together with bS18 to 16S ribosomal RNA. The polypeptide is Small ribosomal subunit protein bS6 (Bartonella henselae (strain ATCC 49882 / DSM 28221 / CCUG 30454 / Houston 1) (Rochalimaea henselae)).